A 507-amino-acid chain; its full sequence is MFS-type transporter acdC (507 aa).

The segment at 1–50 (MSPNAPAVDIGAAPSLDTPEGDTKQPAEDHVEKDSNLVDWDGPDDPEHPQ) is disordered. Residues 21–36 (GDTKQPAEDHVEKDSN) are compositionally biased toward basic and acidic residues. N-linked (GlcNAc...) asparagine glycosylation occurs at asparagine 51. A helical membrane pass occupies residues 58-78 (WGITFSLASMTMWITFSSSVL). Asparagine 90 carries an N-linked (GlcNAc...) asparagine glycan. Transmembrane regions (helical) follow at residues 95-115 (VMPL…LCWA), 125-145 (LPTF…AVAP), 155-175 (FFVG…MADI), 186-206 (PFFF…GGFI), and 215-235 (WTAW…LLIV). A glycan (N-linked (GlcNAc...) asparagine) is linked at asparagine 257. The next 6 helical transmembrane spans lie at 290-310 (PILI…YLFL), 328-348 (IAGL…GIII), 371-391 (LVEM…FGWA), 395-415 (HWMV…VLFM), 442-462 (FLGG…GVDW), and 466-486 (ILGF…IFGA).

Belongs to the major facilitator superfamily. CAR1 family.

Its subcellular location is the membrane. Functionally, MFS-type transporter; part of the gene cluster that mediates the biosynthesis of aspcandine, a pyrrolobenzazepine alkaloid. This is MFS-type transporter acdC from Aspergillus candidus.